The chain runs to 408 residues: Flavohemoprotein (408 aa).

The 138-residue stretch at 1-138 (MLSEKTIRIV…LADIFIGREG (138 aa)) folds into the Globin domain. Residue H85 participates in heme b binding. Residues Y95 and E137 each act as charge relay system in the active site. The reductase stretch occupies residues 149-408 (GGWNGTRTFV…FGPKEELVAV (260 aa)). The FAD-binding FR-type domain occupies 152 to 263 (NGTRTFVVTK…GPPCGEFTVD (112 aa)). Residues Y190 and 205-208 (RNYS) each bind FAD. NADP(+) is bound at residue 277–282 (GIGVTP). 398 to 401 (FFGP) is an FAD binding site.

The protein belongs to the globin family. Two-domain flavohemoproteins subfamily. It in the C-terminal section; belongs to the flavoprotein pyridine nucleotide cytochrome reductase family. The cofactor is heme b. FAD is required as a cofactor.

The enzyme catalyses 2 nitric oxide + NADPH + 2 O2 = 2 nitrate + NADP(+) + H(+). It carries out the reaction 2 nitric oxide + NADH + 2 O2 = 2 nitrate + NAD(+) + H(+). This Rhodopirellula baltica (strain DSM 10527 / NCIMB 13988 / SH1) protein is Flavohemoprotein.